We begin with the raw amino-acid sequence, 270 residues long: Regulatory protein RecX (270 aa).

Belongs to the RecX family.

It localises to the cytoplasm. Modulates RecA activity. The chain is Regulatory protein RecX from Bacillus cereus (strain 03BB102).